Consider the following 204-residue polypeptide: Leucyl/phenylalanyl-tRNA--protein transferase (204 aa).

This sequence belongs to the L/F-transferase family.

It localises to the cytoplasm. It catalyses the reaction N-terminal L-lysyl-[protein] + L-leucyl-tRNA(Leu) = N-terminal L-leucyl-L-lysyl-[protein] + tRNA(Leu) + H(+). The catalysed reaction is N-terminal L-arginyl-[protein] + L-leucyl-tRNA(Leu) = N-terminal L-leucyl-L-arginyl-[protein] + tRNA(Leu) + H(+). It carries out the reaction L-phenylalanyl-tRNA(Phe) + an N-terminal L-alpha-aminoacyl-[protein] = an N-terminal L-phenylalanyl-L-alpha-aminoacyl-[protein] + tRNA(Phe). Functions in the N-end rule pathway of protein degradation where it conjugates Leu, Phe and, less efficiently, Met from aminoacyl-tRNAs to the N-termini of proteins containing an N-terminal arginine or lysine. The sequence is that of Leucyl/phenylalanyl-tRNA--protein transferase from Rhizobium etli (strain CIAT 652).